The chain runs to 96 residues: CRISPR-associated endoribonuclease Cas2 (96 aa).

D8 contacts Mg(2+).

It belongs to the CRISPR-associated endoribonuclease Cas2 protein family. In terms of assembly, homodimer, forms a heterotetramer with a Cas1 homodimer. It depends on Mg(2+) as a cofactor.

Its function is as follows. CRISPR (clustered regularly interspaced short palindromic repeat), is an adaptive immune system that provides protection against mobile genetic elements (viruses, transposable elements and conjugative plasmids). CRISPR clusters contain sequences complementary to antecedent mobile elements and target invading nucleic acids. CRISPR clusters are transcribed and processed into CRISPR RNA (crRNA). Functions as a ssRNA-specific endoribonuclease. Involved in the integration of spacer DNA into the CRISPR cassette. The polypeptide is CRISPR-associated endoribonuclease Cas2 (Chlorobaculum tepidum (strain ATCC 49652 / DSM 12025 / NBRC 103806 / TLS) (Chlorobium tepidum)).